The following is a 226-amino-acid chain: Ribonuclease 3 (226 aa).

The region spanning 6–128 (FNKLQKKMGY…IIGGIFLDSN (123 aa)) is the RNase III domain. Position 41 (E41) interacts with Mg(2+). D45 is a catalytic residue. 2 residues coordinate Mg(2+): N114 and E117. The active site involves E117. In terms of domain architecture, DRBM spans 155–225 (DPKTRLQEYL…AKQALLLFNI (71 aa)).

The protein belongs to the ribonuclease III family. As to quaternary structure, homodimer. Requires Mg(2+) as cofactor.

It localises to the cytoplasm. It carries out the reaction Endonucleolytic cleavage to 5'-phosphomonoester.. Functionally, digests double-stranded RNA. Involved in the processing of primary rRNA transcript to yield the immediate precursors to the large and small rRNAs (23S and 16S). Processes some mRNAs, and tRNAs when they are encoded in the rRNA operon. Processes pre-crRNA and tracrRNA of type II CRISPR loci if present in the organism. In Wigglesworthia glossinidia brevipalpis, this protein is Ribonuclease 3.